The primary structure comprises 293 residues: 4-hydroxy-tetrahydrodipicolinate synthase (293 aa).

Thr46 serves as a coordination point for pyruvate. Tyr133 serves as the catalytic Proton donor/acceptor. Lys161 functions as the Schiff-base intermediate with substrate in the catalytic mechanism. A pyruvate-binding site is contributed by Val202.

The protein belongs to the DapA family. Homotetramer; dimer of dimers.

The protein resides in the cytoplasm. The enzyme catalyses L-aspartate 4-semialdehyde + pyruvate = (2S,4S)-4-hydroxy-2,3,4,5-tetrahydrodipicolinate + H2O + H(+). Its pathway is amino-acid biosynthesis; L-lysine biosynthesis via DAP pathway; (S)-tetrahydrodipicolinate from L-aspartate: step 3/4. In terms of biological role, catalyzes the condensation of (S)-aspartate-beta-semialdehyde [(S)-ASA] and pyruvate to 4-hydroxy-tetrahydrodipicolinate (HTPA). In Wolbachia pipientis wMel, this protein is 4-hydroxy-tetrahydrodipicolinate synthase.